Consider the following 665-residue polypeptide: Fructose-1,6-bisphosphatase class 3 (665 aa).

Belongs to the FBPase class 3 family. Requires Mn(2+) as cofactor.

The enzyme catalyses beta-D-fructose 1,6-bisphosphate + H2O = beta-D-fructose 6-phosphate + phosphate. It participates in carbohydrate biosynthesis; gluconeogenesis. In Clostridium novyi (strain NT), this protein is Fructose-1,6-bisphosphatase class 3.